Here is a 327-residue protein sequence, read N- to C-terminus: GTPase Obg (327 aa).

The Obg domain maps to 3 to 160; it reads NKFTDFIKIY…FIFVLELKIL (158 aa). An OBG-type G domain is found at 161 to 327; the sequence is ADVGLIGLPN…LIYYICNILS (167 aa). Residues 167–174, 192–196, 214–217, 281–284, and 308–310 each bind GTP; these read GLPNSGKS, FTTLN, DIPG, SKSD, and SSF. Mg(2+) is bound by residues Ser174 and Thr194.

The protein belongs to the TRAFAC class OBG-HflX-like GTPase superfamily. OBG GTPase family. In terms of assembly, monomer. Mg(2+) serves as cofactor.

It localises to the cytoplasm. In terms of biological role, an essential GTPase which binds GTP, GDP and possibly (p)ppGpp with moderate affinity, with high nucleotide exchange rates and a fairly low GTP hydrolysis rate. Plays a role in control of the cell cycle, stress response, ribosome biogenesis and in those bacteria that undergo differentiation, in morphogenesis control. In Karelsulcia muelleri (strain GWSS) (Sulcia muelleri), this protein is GTPase Obg.